The following is a 447-amino-acid chain: MIKIKKGLDLPIAGAPAQVIEDGPTIRHVALLGEEYVGMRPSMLVKEGEHVKKGQILFEDKKNPGVVFTSPACGQVVAINRGEQRILQSIVIEITGDEQVNFDRYDRAQFTQLSREQVEKNLIDSGLWTALRTRPYSRSPAPGSSPKAIFVTAMDTQPLAANSQVIIATDKEAFVDGLNVLTKLTEGKVHVCHSAGSLPNVGNNAQITYNQFSGPHPAGLAGTHIHFIEPVSATKTVWHLGYQDVIAIGKLFTTGTLYTDRVIALAGPQVEKPRLIRTCLGADLLELTQGQLKQGENRIISGSVLCGTQSDEVHHYLGRFHTLVSVLREGREKELFGWIMPGIDKFSITRTTIGHFLKNKRFAFSTTMNGGERSMVPIGNYERVMPLDIMATHLLRDLLAGDTDSAQALGCLELDEEDLALCTYVCPGKYEYGPVLREVLTKIEQEG.

It belongs to the NqrA family. In terms of assembly, composed of six subunits; NqrA, NqrB, NqrC, NqrD, NqrE and NqrF.

It carries out the reaction a ubiquinone + n Na(+)(in) + NADH + H(+) = a ubiquinol + n Na(+)(out) + NAD(+). In terms of biological role, NQR complex catalyzes the reduction of ubiquinone-1 to ubiquinol by two successive reactions, coupled with the transport of Na(+) ions from the cytoplasm to the periplasm. NqrA to NqrE are probably involved in the second step, the conversion of ubisemiquinone to ubiquinol. In Photorhabdus laumondii subsp. laumondii (strain DSM 15139 / CIP 105565 / TT01) (Photorhabdus luminescens subsp. laumondii), this protein is Na(+)-translocating NADH-quinone reductase subunit A.